Reading from the N-terminus, the 282-residue chain is UPF0761 membrane protein HAPS_1376 (282 aa).

Transmembrane regions (helical) follow at residues 32–52 (LLSLVPLIMVVFSVFTLLPIF), 89–109 (MGIISIIGLVVVAVMLISSID), 124–144 (VILSFVVYLAVLIFAPIFAGA), 170–190 (LLKFIPFVLTWLLFALVYLIV), 202–222 (VGALFAGVFFTLGKQIFIWYI), and 234–254 (ALATIPIMIVWIHLSWQVVLL).

It belongs to the UPF0761 family.

Its subcellular location is the cell inner membrane. The chain is UPF0761 membrane protein HAPS_1376 from Glaesserella parasuis serovar 5 (strain SH0165) (Haemophilus parasuis).